The chain runs to 231 residues: Putative 3-methyladenine DNA glycosylase (231 aa).

The protein belongs to the DNA glycosylase MPG family.

The protein is Putative 3-methyladenine DNA glycosylase of Pseudomonas fluorescens (strain Pf0-1).